Reading from the N-terminus, the 303-residue chain is Mitochondrial carrier homolog 2 (303 aa).

A2 bears the N-acetylalanine mark. Residues 2 to 15 (ADAASQVLLGSGLT) are Mitochondrial intermembrane-facing. 2 Solcar repeats span residues 2-98 (ADAA…YQES) and 118-206 (DHVI…VNTY). The helical transmembrane segment at 16–36 (ILSQPLMYVKVLIQVGYEPLP) threads the bilayer. Residues 37 to 77 (PTIGRNIFGRQVCQLPGLFSYAQHIASIDGRRGLFTGLTPR) are Cytoplasmic-facing. Residues 78–92 (LCSGVLGTVVHGKVL) traverse the membrane as a helical segment. Over 93–135 (QHYQESDKGEELGPGNVQKEVSSSFDHVIKETTREMIARSAAT) the chain is Mitochondrial intermembrane. Residues 136–156 (LITHPFHVITLRSMVQFIGRE) traverse the membrane as a helical segment. Over 157–180 (SKYCGLCDSIITIYREEGILGFFA) the chain is Cytoplasmic. Residues 181-199 (GLVPRLLGDILSLWLCNSL) form a helical membrane-spanning segment. Residues 200–231 (AYLVNTYALDSGVSTMNEMKSYSQAVTGFFAS) lie on the Mitochondrial intermembrane side of the membrane. The chain crosses the membrane as a helical span at residues 232–252 (MLTYPFVLVSNLMAVNNCGLA). The Cytoplasmic portion of the chain corresponds to 253-280 (GGCPPYSPIYTSWIDCWCMLQKEGNMSR). Residues 281–303 (GNSLFFRKVPFGKTYCCDLKMLI) form a helical membrane-spanning segment.

The protein belongs to the mitochondrial carrier (TC 2.A.29) family. As to quaternary structure, interacts with p15BID.

Its subcellular location is the mitochondrion outer membrane. In terms of biological role, protein insertase that mediates insertion of transmembrane proteins into the mitochondrial outer membrane. Catalyzes insertion of proteins with alpha-helical transmembrane regions, such as signal-anchored, tail-anchored and multi-pass membrane proteins. Does not mediate insertion of beta-barrel transmembrane proteins. Also acts as a receptor for the truncated form of pro-apoptotic BH3-interacting domain death agonist (p15 BID) and has therefore a critical function in apoptosis. Regulates the quiescence/cycling of hematopoietic stem cells (HSCs). Acts as a regulator of mitochondrial fusion, essential for the naive-to-primed interconversion of embryonic stem cells (ESCs). Acts as a regulator of lipid homeostasis and has a regulatory role in adipocyte differentiation and biology. The sequence is that of Mitochondrial carrier homolog 2 from Homo sapiens (Human).